The primary structure comprises 208 residues: Ras-related protein RABH1b (208 aa).

Residue 16-23 (GDQSVGKT) coordinates GTP. An Effector region motif is present at residues 38-46 (YQATIGIDF). GTP-binding positions include 64–68 (DTAGQ), 122–125 (NKTD), and 152–153 (SA). S-geranylgeranyl cysteine attachment occurs at residues cysteine 206 and cysteine 208. Residue cysteine 208 is modified to Cysteine methyl ester.

This sequence belongs to the small GTPase superfamily. Rab family. As to quaternary structure, interacts with the C-terminus of GC5, but not with GC3. Expressed in roots, stems, leaves and flowers.

It is found in the golgi apparatus membrane. It localises to the cytoplasm. Its subcellular location is the cytosol. Its function is as follows. Protein transport. Regulator of membrane traffic from the Golgi apparatus towards the endoplasmic reticulum (ER). Binds GTP and GDP and possesses intrinsic GTPase activity. In Arabidopsis thaliana (Mouse-ear cress), this protein is Ras-related protein RABH1b (RABH1B).